Reading from the N-terminus, the 308-residue chain is Cilia- and flagella-associated protein 73 (308 aa).

Coiled coils occupy residues 34–143 (RLLE…LEPC) and 175–233 (AALR…WESK).

This sequence belongs to the CFAP73 family.

The protein resides in the cytoplasm. Its subcellular location is the cytoskeleton. The protein localises to the cilium axoneme. May play a role in ciliary/flagellar motility by regulating the assembly and the activity of axonemal inner dynein arm. The polypeptide is Cilia- and flagella-associated protein 73 (Homo sapiens (Human)).